The primary structure comprises 927 residues: Protein unc-45 homolog B (927 aa).

TPR repeat units follow at residues P4–K37, A41–D74, and K76–N108. ARM repeat units follow at residues D167–T206, R209–D248, and D746–L785.

In terms of tissue distribution, detected initially throughout the somites and the heart and gradually also expressed in the jaw, branchial arches and body wall muscles at later embryonic stages.

The protein resides in the cytoplasm. Its subcellular location is the myofibril. It localises to the sarcomere. It is found in the z line. The protein localises to the a band. The protein resides in the perinuclear region. Its subcellular location is the cytosol. Acts as a co-chaperone for HSP90 and is required for proper folding of the myosin motor domain. Plays a role in sarcomere formation during muscle cell development. Is necessary for normal early lens development. This Xenopus tropicalis (Western clawed frog) protein is Protein unc-45 homolog B.